Reading from the N-terminus, the 292-residue chain is MYSSSSIEGNLYGFSAQEPQRAPIGVFDSGVGGLTVLRQIYRQLPNESVIYFGDTARLPYGIRSQAEILTFVRDILDWMQQQHVKMVVMACNTSSALALDIVREEYDFPILGVILPGAKAAVQQGKRIGVISTPATAKSNAYRQAIWEIDPNVEVWQVGCPEFVPLIEQNRIQDPYTTEVARAYLEPLIQQDIDTLVYGCTHYPLLAPVLRSLLPPQVKIIDPAVHVVTACTQELDLLGLSNTHPPLPTRFAVSGCPQQFSQSGVHWLGYTPLVEAVDFAGVPVSQLQQDLA.

Residues 28-29 (DS) and 60-61 (YG) each bind substrate. Cys-91 (proton donor/acceptor) is an active-site residue. 92–93 (NT) is a binding site for substrate. Residue Cys-200 is the Proton donor/acceptor of the active site. 201–202 (TH) contacts substrate.

It belongs to the aspartate/glutamate racemases family.

It carries out the reaction L-glutamate = D-glutamate. It functions in the pathway cell wall biogenesis; peptidoglycan biosynthesis. Its function is as follows. Provides the (R)-glutamate required for cell wall biosynthesis. This is Glutamate racemase from Nostoc sp. (strain PCC 7120 / SAG 25.82 / UTEX 2576).